We begin with the raw amino-acid sequence, 572 residues long: MLTSQYLLSTSKDIPYDAKIISHQLMIRSGMIRKTSSGLYVWLPTGMRVLKKIKNIITTEMEKINALEILMPIIQPEYLWKESRRLNLYGEELLRFLDRRKNQFILGPTNEEVVTNFIGSEIHSYKQLPLTVYQIQTKFRDEIRPRFGIIRTREFTMKDAYSFHINQSCLENTYNKFYDSYINIFKKMNLNFCAVKADSGSMGGNISHEFQAFSQNGEDEIVFSNDKLYSSNMNMAESIETIDFFKKKYSSCLIKNKTNTKKSIIMSEKLNTPLINQIQTFLIQTKINDITSIAALLIRGDHELNFFKVEKIDIINKPLVFLNEKEVISLIGVKKEFLGPLGLKVPIIADISTFNMKNFTIGSNINKHFFINVNWNIDLPMPIFKDIRKVTKNDLSPNGSGYLNIKQSIEIGHIFQLGQKYSRKIQQSVKIKNGNLKNLYMGCYGIGITRIAAAVIEQHHDKNGIIWPDSIAPFEVVILPINMKKDNKIKIIAHFLYKKFKKTGIDVILDDRDERPGVMFNEVDLIGIPHQIIISKRSINYDNVEYRERKNKENILINIKDIKNFIIQKLKK.

This sequence belongs to the class-II aminoacyl-tRNA synthetase family. ProS type 1 subfamily. In terms of assembly, homodimer.

The protein resides in the cytoplasm. It carries out the reaction tRNA(Pro) + L-proline + ATP = L-prolyl-tRNA(Pro) + AMP + diphosphate. Its function is as follows. Catalyzes the attachment of proline to tRNA(Pro) in a two-step reaction: proline is first activated by ATP to form Pro-AMP and then transferred to the acceptor end of tRNA(Pro). As ProRS can inadvertently accommodate and process non-cognate amino acids such as alanine and cysteine, to avoid such errors it has two additional distinct editing activities against alanine. One activity is designated as 'pretransfer' editing and involves the tRNA(Pro)-independent hydrolysis of activated Ala-AMP. The other activity is designated 'posttransfer' editing and involves deacylation of mischarged Ala-tRNA(Pro). The misacylated Cys-tRNA(Pro) is not edited by ProRS. The polypeptide is Proline--tRNA ligase (Buchnera aphidicola subsp. Acyrthosiphon pisum (strain APS) (Acyrthosiphon pisum symbiotic bacterium)).